We begin with the raw amino-acid sequence, 24 residues long: Fraternine (24 aa).

An intrachain disulfide couples Cys-11 to Cys-24. A Cysteine amide modification is found at Cys-24.

As to expression, expressed by the venom gland.

It localises to the secreted. Wasp venom peptide that acts as a potent mast cell degranulating peptide without hemolytic activity. Shows neuroprotective effect, since it prevents the death of dopaminergic neurons of the brain substantia nigra region and recovers motor deficit in a 6-hydroxydopamine (6-OHDA)-induced murine model of Parkinson disease. In Parachartergus fraternus (Artistic wasp), this protein is Fraternine.